Consider the following 361-residue polypeptide: Cyclin-Y-like protein 2 (361 aa).

One can recognise a Cyclin N-terminal domain in the interval Met-204–Asn-286.

Belongs to the cyclin family. Cyclin Y subfamily.

The sequence is that of Cyclin-Y-like protein 2 (CCNYL2) from Homo sapiens (Human).